Consider the following 165-residue polypeptide: Histone H1 (165 aa).

The disordered stretch occupies residues 1 to 165; sequence GKQSTSKSVT…KKATKGSKKN (165 aa). Over residues 9-18 the composition is skewed to basic and acidic residues; the sequence is VTREKKDVKK. Residues 20-31 are compositionally biased toward basic residues; it reads VAPKKAIKKVTK. The segment covering 32–41 has biased composition (low complexity); sequence KSTTPVKTSK. A phosphothreonine mark is found at threonine 48 and threonine 54. Residues 68–89 show a composition bias toward basic and acidic residues; that stretch reads TMKESVSDAKKTVHKSAGDKKL. Serine 83 is subject to Phosphoserine. A compositionally biased stretch (basic residues) spans 103–117; sequence KIVHPAKKAAAKPKT. Threonine 117 bears the Phosphothreonine mark. Residues 118-157 show a composition bias toward basic and acidic residues; sequence AKKEVKKDTKPVKKDAKKDTKPVKKDAKKDTKPAKKDTKK.

Cell-growth/division-associated phosphorylation by a CDC2-like kinase. Is additionally phosphorylated on either Ser-33, Thr-34 or Thr-35, and on either Thr-39 or Ser-40.

The protein localises to the nucleus. It is found in the chromosome. Its function is as follows. Histones H1 are necessary for the condensation of nucleosome chains into higher-order structures. The polypeptide is Histone H1 (HHO) (Tetrahymena pyriformis).